The sequence spans 789 residues: Potassium transporter 4 (789 aa).

Topologically, residues 1–32 are cytoplasmic; it reads MAPAESGVSPRRNPSQLSWMNLSSNLILAYQS. Position 9 is a phosphoserine (S9). Residues 33-53 form a helical membrane-spanning segment; the sequence is FGVVYGDLSTSPLYVFPSTFI. At 54-68 the chain is on the extracellular side; that stretch reads GKLHKHHNEDAVFGA. Residues 69 to 89 traverse the membrane as a helical segment; it reads FSLIFWTLTLIPLLKYLLVLL. Topologically, residues 90–154 are cytoplasmic; sequence SADDNGEGGT…FLEKHKRLRT (65 aa). The helical transmembrane segment at 155 to 175 threads the bilayer; the sequence is ALLLVVLFGAAMVIGDGVLTP. Over 176-195 the chain is Extracellular; that stretch reads ALSVLSSLSGLQATEKNVTD. Residues 196 to 216 form a helical membrane-spanning segment; sequence GELLVLACVILVGLFALQHCG. Residues 217-219 are Cytoplasmic-facing; it reads THR. The helical transmembrane segment at 220–240 threads the bilayer; the sequence is VAFMFAPIVIIWLISIFFIGL. The Extracellular segment spans residues 241 to 270; it reads YNIIRWNPKIIHAVSPLYIIKFFRVTGQDG. Residues 271-291 form a helical membrane-spanning segment; the sequence is WISLGGVLLSVTGTEAMFANL. Residues 292–300 lie on the Cytoplasmic side of the membrane; sequence GHFTSVSIR. Residues 301-321 traverse the membrane as a helical segment; it reads VAFAVVVYPCLVVQYMGQAAF. At 322-340 the chain is on the extracellular side; the sequence is LSKNLGSIPNSFYDSVPDP. Residues 341–361 form a helical membrane-spanning segment; that stretch reads VFWPVFVIATLAAIVGSQAVI. The Cytoplasmic portion of the chain corresponds to 362–392; that stretch reads TTTFSIIKQCHALGCFPRIKVVHTSKHIYGQ. Residues 393 to 413 form a helical membrane-spanning segment; sequence IYIPEINWILMILTLAMAIGF. Over 414–424 the chain is Extracellular; it reads RDTTLIGNAYG. A helical transmembrane segment spans residues 425–445; it reads IACMVVMFITTFFMALVIVVV. Residues 446–450 lie on the Cytoplasmic side of the membrane; sequence WQKSC. Residues 451–471 form a helical membrane-spanning segment; it reads FLAALFLGTLWIIEGVYLSAA. Topologically, residues 472 to 478 are extracellular; that stretch reads LMKVTEG. The helical transmembrane segment at 479–499 threads the bilayer; sequence GWVPFVLTFIFMIAMYVWHYG. Over 500–789 the chain is Cytoplasmic; that stretch reads TRRKYSFDLH…LIEVGMIYYV (290 aa).

Belongs to the HAK/KUP transporter (TC 2.A.72.3) family. In terms of tissue distribution, detected at very low levels in roots, stems, leaves and flowers of mature plants and strongly expressed in the roots of potassium-starved plants.

It is found in the cell membrane. Functionally, high-affinity potassium transporter. In Arabidopsis thaliana (Mouse-ear cress), this protein is Potassium transporter 4 (POT4).